A 380-amino-acid polypeptide reads, in one-letter code: Queuine tRNA-ribosyltransferase (380 aa).

Catalysis depends on Asp95, which acts as the Proton acceptor. Substrate contacts are provided by residues 95-99 (DSGGF), Asp149, Gln192, and Gly219. Residues 250–256 (GVGSADA) form an RNA binding region. Asp269 serves as the catalytic Nucleophile. Residues 274–278 (TRIAR) form an RNA binding; important for wobble base 34 recognition region. Residues Cys307, Cys309, Cys312, and His338 each contribute to the Zn(2+) site.

It belongs to the queuine tRNA-ribosyltransferase family. Homodimer. Within each dimer, one monomer is responsible for RNA recognition and catalysis, while the other monomer binds to the replacement base PreQ1. Zn(2+) is required as a cofactor.

It catalyses the reaction 7-aminomethyl-7-carbaguanine + guanosine(34) in tRNA = 7-aminomethyl-7-carbaguanosine(34) in tRNA + guanine. It functions in the pathway tRNA modification; tRNA-queuosine biosynthesis. In terms of biological role, catalyzes the base-exchange of a guanine (G) residue with the queuine precursor 7-aminomethyl-7-deazaguanine (PreQ1) at position 34 (anticodon wobble position) in tRNAs with GU(N) anticodons (tRNA-Asp, -Asn, -His and -Tyr). Catalysis occurs through a double-displacement mechanism. The nucleophile active site attacks the C1' of nucleotide 34 to detach the guanine base from the RNA, forming a covalent enzyme-RNA intermediate. The proton acceptor active site deprotonates the incoming PreQ1, allowing a nucleophilic attack on the C1' of the ribose to form the product. After dissociation, two additional enzymatic reactions on the tRNA convert PreQ1 to queuine (Q), resulting in the hypermodified nucleoside queuosine (7-(((4,5-cis-dihydroxy-2-cyclopenten-1-yl)amino)methyl)-7-deazaguanosine). The sequence is that of Queuine tRNA-ribosyltransferase from Lactiplantibacillus plantarum (strain ATCC BAA-793 / NCIMB 8826 / WCFS1) (Lactobacillus plantarum).